The chain runs to 234 residues: uncharacterized protein (234 aa).

The next 7 helical transmembrane spans lie at 25–45, 57–77, 85–105, 108–128, 142–162, 163–183, and 203–223; these read LMGA…TFFL, LFFL…QGLA, LPIF…TLLM, ATDI…LSVY, AFGV…FFAS, TGLT…LIAW, and WAIS…LFLL.

It belongs to the BI1 family.

The protein resides in the cell membrane. This is an uncharacterized protein from Lactococcus lactis subsp. lactis (strain IL1403) (Streptococcus lactis).